The primary structure comprises 396 residues: Cell division protein DivIB (396 aa).

Disordered regions lie at residues 1-23 and 37-116; these read MSKDKKNEDKETLEELKELSEWQ and EVAL…ATKE. Residues 1–130 are Cytoplasmic-facing; that stretch reads MSKDKKNEDK…AKIPGIHILR (130 aa). Composition is skewed to basic and acidic residues over residues 37–65 and 75–116; these read EVALAEEKEKERQARMGEESEKSEDKQDQ and ESAK…ATKE. A helical membrane pass occupies residues 131–151; it reads AFTILFPSLLLLIVSAYLLSP. Over 152 to 396 the chain is Extracellular; that stretch reads YATMKDIRVE…NQTNQRSSRR (245 aa). One can recognise a POTRA domain in the interval 153-223; it reads ATMKDIRVEG…TKFTIKVKEY (71 aa). The span at 361-385 shows a compositional bias: basic and acidic residues; sequence KAKQEAKEAEKKQEEEQKKQEEESN. A disordered region spans residues 361–396; that stretch reads KAKQEAKEAEKKQEEEQKKQEEESNRNQTNQRSSRR. Residues 386 to 396 are compositionally biased toward low complexity; the sequence is RNQTNQRSSRR.

The protein belongs to the FtsQ/DivIB family. DivIB subfamily.

It localises to the cell membrane. Functionally, cell division protein that may be involved in stabilizing or promoting the assembly of the division complex. The sequence is that of Cell division protein DivIB from Streptococcus pneumoniae (strain ATCC BAA-255 / R6).